Consider the following 315-residue polypeptide: Secreted frizzled-related protein 3 (315 aa).

Positions 1 to 21 (MWRGLPALALAALLLLGRAPA) are cleaved as a signal peptide. An FZ domain is found at 22–142 (GRAAACEPVR…LYDRGVCISP (121 aa)). 5 disulfides stabilise this stretch: cysteine 27–cysteine 88, cysteine 35–cysteine 81, cysteine 72–cysteine 111, cysteine 100–cysteine 139, and cysteine 104–cysteine 128. The N-linked (GlcNAc...) asparagine glycan is linked to asparagine 41. An NTR domain is found at 170–290 (CKCKPIKATQ…WDQKLRHLGK (121 aa)). A disordered region spans residues 284–315 (KLRHLGKGKGEPGQSDSALKTGKPGNARQTRS).

Belongs to the secreted frizzled-related protein (sFRP) family.

It is found in the secreted. Functionally, soluble frizzled-related proteins (sFRPS) function as modulators of Wnt signaling through direct interaction with Wnts. They have a role in regulating cell growth and differentiation in specific cell types. SFRP3/FRZB appears to be involved in limb skeletogenesis. Antagonist of Wnt8 signaling. Regulates chondrocyte maturation and long bone development. This Gallus gallus (Chicken) protein is Secreted frizzled-related protein 3 (FRZB).